Reading from the N-terminus, the 376-residue chain is RING-H2 finger protein ATL46 (376 aa).

Residues 45–65 (VLFVIVILAVLFFISGLLHLL) form a helical membrane-spanning segment. The RING-type; atypical zinc-finger motif lies at 143-185 (CAVCLCEFSEKDKLRLLPMCSHAFHLNCIDTWLQSNSTCPLCR). Basic and acidic residues-rich tracts occupy residues 296–305 (RLKPQDKESE) and 358–376 (DLPK…NDGR). Disordered regions lie at residues 296–320 (RLKP…KINT) and 341–376 (FSSD…NDGR).

It belongs to the RING-type zinc finger family. ATL subfamily.

Its subcellular location is the membrane. The enzyme catalyses S-ubiquitinyl-[E2 ubiquitin-conjugating enzyme]-L-cysteine + [acceptor protein]-L-lysine = [E2 ubiquitin-conjugating enzyme]-L-cysteine + N(6)-ubiquitinyl-[acceptor protein]-L-lysine.. It participates in protein modification; protein ubiquitination. This Arabidopsis thaliana (Mouse-ear cress) protein is RING-H2 finger protein ATL46 (ATL46).